The sequence spans 415 residues: DNA polymerase IV (415 aa).

The 182-residue stretch at 15–196 (ILHVDMNCFF…LPVGAMHGIG (182 aa)) folds into the UmuC domain. 2 residues coordinate Mg(2+): Asp19 and Asp115. Glu116 is an active-site residue. The disordered stretch occupies residues 238–260 (KGMDDRQVDPSQMGQHKSVGNSM). Polar residues predominate over residues 246 to 260 (DPSQMGQHKSVGNSM).

The protein belongs to the DNA polymerase type-Y family. In terms of assembly, monomer. It depends on Mg(2+) as a cofactor.

It localises to the cytoplasm. It catalyses the reaction DNA(n) + a 2'-deoxyribonucleoside 5'-triphosphate = DNA(n+1) + diphosphate. Functionally, poorly processive, error-prone DNA polymerase involved in untargeted mutagenesis. Copies undamaged DNA at stalled replication forks, which arise in vivo from mismatched or misaligned primer ends. These misaligned primers can be extended by PolIV. Exhibits no 3'-5' exonuclease (proofreading) activity. May be involved in translesional synthesis, in conjunction with the beta clamp from PolIII. This chain is DNA polymerase IV, found in Bacillus cereus (strain ZK / E33L).